The following is a 122-amino-acid chain: MAPKNEKKSRSTINEVVTREYTIHIHARIRGIGSKKRAPRAIDEIKKFAKIQMKTNDVRVDTKLNKFIWSKGIKNVPYRVRVRLSRRRNEDEDSAQKLYTLCTYVPCTNFHGLTNVNVDSEE.

This sequence belongs to the eukaryotic ribosomal protein eL31 family.

The sequence is that of Large ribosomal subunit protein eL31 from Caenorhabditis elegans.